We begin with the raw amino-acid sequence, 150 residues long: SsrA-binding protein (150 aa).

The protein belongs to the SmpB family.

The protein localises to the cytoplasm. Required for rescue of stalled ribosomes mediated by trans-translation. Binds to transfer-messenger RNA (tmRNA), required for stable association of tmRNA with ribosomes. tmRNA and SmpB together mimic tRNA shape, replacing the anticodon stem-loop with SmpB. tmRNA is encoded by the ssrA gene; the 2 termini fold to resemble tRNA(Ala) and it encodes a 'tag peptide', a short internal open reading frame. During trans-translation Ala-aminoacylated tmRNA acts like a tRNA, entering the A-site of stalled ribosomes, displacing the stalled mRNA. The ribosome then switches to translate the ORF on the tmRNA; the nascent peptide is terminated with the 'tag peptide' encoded by the tmRNA and targeted for degradation. The ribosome is freed to recommence translation, which seems to be the essential function of trans-translation. This is SsrA-binding protein from Campylobacter jejuni (strain RM1221).